Consider the following 511-residue polypeptide: Exodeoxyribonuclease 7 large subunit (511 aa).

The protein belongs to the XseA family. As to quaternary structure, heterooligomer composed of large and small subunits.

It localises to the cytoplasm. It carries out the reaction Exonucleolytic cleavage in either 5'- to 3'- or 3'- to 5'-direction to yield nucleoside 5'-phosphates.. Functionally, bidirectionally degrades single-stranded DNA into large acid-insoluble oligonucleotides, which are then degraded further into small acid-soluble oligonucleotides. The protein is Exodeoxyribonuclease 7 large subunit of Brucella melitensis biotype 1 (strain ATCC 23456 / CCUG 17765 / NCTC 10094 / 16M).